The primary structure comprises 443 residues: Thymidine phosphorylase (443 aa).

Belongs to the thymidine/pyrimidine-nucleoside phosphorylase family. Homodimer.

The enzyme catalyses thymidine + phosphate = 2-deoxy-alpha-D-ribose 1-phosphate + thymine. The protein operates within pyrimidine metabolism; dTMP biosynthesis via salvage pathway; dTMP from thymine: step 1/2. The enzymes which catalyze the reversible phosphorolysis of pyrimidine nucleosides are involved in the degradation of these compounds and in their utilization as carbon and energy sources, or in the rescue of pyrimidine bases for nucleotide synthesis. In Shewanella halifaxensis (strain HAW-EB4), this protein is Thymidine phosphorylase.